Here is a 456-residue protein sequence, read N- to C-terminus: Chromosomal replication initiator protein DnaA (456 aa).

A domain I, interacts with DnaA modulators region spans residues 1–85; that stretch reads MDADLNKLWE…EIKFIIESDL (85 aa). Positions 85–117 are domain II; the sequence is LNNEDELNNSDNSDKNRDKNSRRNIVVNDEMSS. A domain III, AAA+ region region spans residues 118-334; sequence TLNPKYTFNS…GALIRIIAYS (217 aa). ATP is bound by residues Gly162, Gly164, Lys165, and Thr166. Residues 335–456 are domain IV, binds dsDNA; it reads SLTNREVTVD…SDITKKVSQN (122 aa).

This sequence belongs to the DnaA family. In terms of assembly, oligomerizes as a right-handed, spiral filament on DNA at oriC.

It localises to the cytoplasm. In terms of biological role, plays an essential role in the initiation and regulation of chromosomal replication. ATP-DnaA binds to the origin of replication (oriC) to initiate formation of the DNA replication initiation complex once per cell cycle. Binds the DnaA box (a 9 base pair repeat at the origin) and separates the double-stranded (ds)DNA. Forms a right-handed helical filament on oriC DNA; dsDNA binds to the exterior of the filament while single-stranded (ss)DNA is stabiized in the filament's interior. The ATP-DnaA-oriC complex binds and stabilizes one strand of the AT-rich DNA unwinding element (DUE), permitting loading of DNA polymerase. After initiation quickly degrades to an ADP-DnaA complex that is not apt for DNA replication. Binds acidic phospholipids. This chain is Chromosomal replication initiator protein DnaA, found in Clostridium botulinum (strain Eklund 17B / Type B).